The primary structure comprises 604 residues: uncharacterized protein (604 aa).

The region spanning L49–S332 is the ABC transmembrane type-1 domain. 4 helical membrane passes run I50–I70, L86–F106, V172–I192, and I288–V308. An ABC transporter domain is found at I366 to S600. G399–T406 serves as a coordination point for ATP. A helical transmembrane segment spans residues L510–T530.

It belongs to the ABC transporter superfamily.

The protein localises to the cell membrane. This is an uncharacterized protein from Bacillus subtilis (strain 168).